The sequence spans 389 residues: Nucleic acid dioxygenase ALKBH1 (389 aa).

Residues 86 to 389 (SKWQAYGLKG…VKRARINPDS (304 aa)) form a tRNA-binding region. Residues Trp-144 and 175–177 (YHY) each bind substrate. Positions 208-347 (GFEDFRAEAG…RVNMTVRQVL (140 aa)) constitute a Fe2OG dioxygenase domain. 220–222 (NYY) contributes to the 2-oxoglutarate binding site. Fe cation is bound by residues His-231, Asp-233, and His-287. Substrate is bound at residue Asp-233. 338 to 344 (RVNMTVR) lines the 2-oxoglutarate pocket.

The protein belongs to the alkB family. Monomer. Interacts with DNAJB6. Fe(2+) serves as cofactor. As to expression, ubiquitous.

It localises to the nucleus. The protein resides in the mitochondrion. The enzyme catalyses 2'-deoxyribonucleotide-(2'-deoxyribose 5'-phosphate)-2'-deoxyribonucleotide-DNA = a 3'-end 2'-deoxyribonucleotide-(2,3-dehydro-2,3-deoxyribose 5'-phosphate)-DNA + a 5'-end 5'-phospho-2'-deoxyribonucleoside-DNA + H(+). It catalyses the reaction a methylated nucleobase within DNA + 2-oxoglutarate + O2 = a nucleobase within DNA + formaldehyde + succinate + CO2. It carries out the reaction an N(6)-methyl-2'-deoxyadenosine in DNA + 2-oxoglutarate + O2 = a 2'-deoxyadenosine in DNA + formaldehyde + succinate + CO2. The catalysed reaction is an N(1)-methyladenosine in tRNA + 2-oxoglutarate + O2 = an adenosine in tRNA + formaldehyde + succinate + CO2. The enzyme catalyses 5-methylcytidine(34) in mitochondrial tRNA(Met) + 2 2-oxoglutarate + 2 O2 = 5-formylcytidine(34) in mitochondrial tRNA(Met) + 2 succinate + 2 CO2 + H2O. It catalyses the reaction an N(3)-methylcytidine in mRNA + 2-oxoglutarate + O2 = a cytidine in mRNA + formaldehyde + succinate + CO2. It carries out the reaction N(1)-methyladenosine(58) in tRNA + 2-oxoglutarate + O2 = adenosine(58) in tRNA + formaldehyde + succinate + CO2. Its function is as follows. Dioxygenase that acts on nucleic acids, such as DNA and tRNA. Requires molecular oxygen, alpha-ketoglutarate and iron. A number of activities have been described for this dioxygenase, but recent results suggest that it mainly acts on tRNAs and mediates their demethylation or oxidation depending on the context and subcellular compartment. Mainly acts as a tRNA demethylase by removing N(1)-methyladenine from various tRNAs, with a preference for N(1)-methyladenine at position 58 (m1A58) present on a stem loop structure of tRNAs. Acts as a regulator of translation initiation and elongation in response to glucose deprivation: regulates both translation initiation, by mediating demethylation of tRNA(Met), and translation elongation, N(1)-methyladenine-containing tRNAs being preferentially recruited to polysomes to promote translation elongation. In mitochondrion, specifically interacts with mt-tRNA(Met) and mediates oxidation of mt-tRNA(Met) methylated at cytosine(34) to form 5-formylcytosine (f(5)c) at this position. mt-tRNA(Met) containing the f(5)c modification at the wobble position enables recognition of the AUA codon in addition to the AUG codon, expanding codon recognition in mitochondrial translation. Specifically demethylates DNA methylated on the 6th position of adenine (N(6)-methyladenosine) DNA. N(6)-methyladenosine (m6A) DNA is present at some L1 elements in embryonic stem cells and probably promotes their silencing. Demethylates mRNAs containing N(3)-methylcytidine modification. Also able to repair alkylated single-stranded DNA by oxidative demethylation, but with low activity. Also has DNA lyase activity and introduces double-stranded breaks at abasic sites: cleaves both single-stranded DNA and double-stranded DNA at abasic sites, with the greatest activity towards double-stranded DNA with two abasic sites. DNA lyase activity does not require alpha-ketoglutarate and iron and leads to the formation of an irreversible covalent protein-DNA adduct with the 5' DNA product. DNA lyase activity is not required during base excision repair and class switch recombination of the immunoglobulin heavy chain during B lymphocyte activation. May play a role in placental trophoblast lineage differentiation. This is Nucleic acid dioxygenase ALKBH1 from Homo sapiens (Human).